The chain runs to 476 residues: Aspartyl/glutamyl-tRNA(Asn/Gln) amidotransferase subunit B (476 aa).

The protein belongs to the GatB/GatE family. GatB subfamily. As to quaternary structure, heterotrimer of A, B and C subunits.

It carries out the reaction L-glutamyl-tRNA(Gln) + L-glutamine + ATP + H2O = L-glutaminyl-tRNA(Gln) + L-glutamate + ADP + phosphate + H(+). It catalyses the reaction L-aspartyl-tRNA(Asn) + L-glutamine + ATP + H2O = L-asparaginyl-tRNA(Asn) + L-glutamate + ADP + phosphate + 2 H(+). Its function is as follows. Allows the formation of correctly charged Asn-tRNA(Asn) or Gln-tRNA(Gln) through the transamidation of misacylated Asp-tRNA(Asn) or Glu-tRNA(Gln) in organisms which lack either or both of asparaginyl-tRNA or glutaminyl-tRNA synthetases. The reaction takes place in the presence of glutamine and ATP through an activated phospho-Asp-tRNA(Asn) or phospho-Glu-tRNA(Gln). The protein is Aspartyl/glutamyl-tRNA(Asn/Gln) amidotransferase subunit B of Clostridium botulinum (strain Loch Maree / Type A3).